Here is a 397-residue protein sequence, read N- to C-terminus: Serpin B10 (397 aa).

The Nuclear localization signal motif lies at 74-77 (KKRK).

Belongs to the serpin family. Ov-serpin subfamily.

The protein resides in the nucleus. It is found in the cytoplasm. Its function is as follows. Protease inhibitor that may play a role in the regulation of protease activities during hematopoiesis and apoptosis induced by TNF. May regulate protease activities in the cytoplasm and in the nucleus. This chain is Serpin B10 (SERPINB10), found in Otolemur garnettii (Small-eared galago).